Reading from the N-terminus, the 868-residue chain is DNA mismatch repair protein MutS (868 aa).

620-627 (GPNMSGKS) provides a ligand contact to ATP.

It belongs to the DNA mismatch repair MutS family.

Functionally, this protein is involved in the repair of mismatches in DNA. It is possible that it carries out the mismatch recognition step. This protein has a weak ATPase activity. The chain is DNA mismatch repair protein MutS from Flavobacterium johnsoniae (strain ATCC 17061 / DSM 2064 / JCM 8514 / BCRC 14874 / CCUG 350202 / NBRC 14942 / NCIMB 11054 / UW101) (Cytophaga johnsonae).